The chain runs to 410 residues: Probable inactive allantoicase (410 aa).

The protein belongs to the allantoicase family.

Its function is as follows. The function of this enzyme is unclear as allantoicase activity is not known to exist in mammals. The protein is Probable inactive allantoicase (ALLC) of Macaca fascicularis (Crab-eating macaque).